The primary structure comprises 1234 residues: Transcription-repair-coupling factor (1234 aa).

The Helicase ATP-binding domain occupies 663 to 824 (DMEKPIPMDR…LAGIREMSTI (162 aa)). 676-683 (GDVGYGKT) serves as a coordination point for ATP. The DEEQ box signature appears at 777-780 (DEEQ). Residues 842–999 (DDKQIAAALR…GMAVALKDLE (158 aa)) form the Helicase C-terminal domain. Positions 1207–1234 (RQHIGITNPSPPGEDGRGRNTTIKERQP) are disordered. Positions 1220–1234 (EDGRGRNTTIKERQP) are enriched in basic and acidic residues.

This sequence in the N-terminal section; belongs to the UvrB family. The protein in the C-terminal section; belongs to the helicase family. RecG subfamily.

It localises to the cytoplasm. Its function is as follows. Couples transcription and DNA repair by recognizing RNA polymerase (RNAP) stalled at DNA lesions. Mediates ATP-dependent release of RNAP and its truncated transcript from the DNA, and recruitment of nucleotide excision repair machinery to the damaged site. The chain is Transcription-repair-coupling factor from Mycobacterium bovis (strain ATCC BAA-935 / AF2122/97).